An 89-amino-acid polypeptide reads, in one-letter code: Nucleoside triphosphatase I (89 aa).

Residues Phe42–Leu89 enclose the Helicase ATP-binding domain. His55–Thr62 contributes to the ATP binding site.

The protein belongs to the helicase family. NPH I subfamily.

The catalysed reaction is a ribonucleoside 5'-triphosphate + H2O = a ribonucleoside 5'-diphosphate + phosphate + H(+). Its function is as follows. Serves two roles in transcription; it acts in concert with viral termination factor/capping enzyme to catalyze release of UUUUUNU-containing nascent RNA from the elongation complex, and it acts by itself as a polymerase elongation factor to facilitate readthrough of intrinsic pause sites. In Swinepox virus (strain Kasza) (SWPV), this protein is Nucleoside triphosphatase I (NPH1).